The sequence spans 880 residues: DNA mismatch repair protein MutS (880 aa).

Residue 624-631 (GPNMAGKS) participates in ATP binding.

Belongs to the DNA mismatch repair MutS family.

In terms of biological role, this protein is involved in the repair of mismatches in DNA. It is possible that it carries out the mismatch recognition step. This protein has a weak ATPase activity. The sequence is that of DNA mismatch repair protein MutS from Alkaliphilus metalliredigens (strain QYMF).